The following is a 363-amino-acid chain: Protein-glutamate methylesterase/protein-glutamine glutaminase 1 (363 aa).

The 118-residue stretch at 7 to 124 folds into the Response regulatory domain; that stretch reads KVLIVDDSAL…SRGMQEYARE (118 aa). Position 58 is a 4-aspartylphosphate (Asp-58). One can recognise a CheB-type methylesterase domain in the interval 164–356; it reads FSSTEKIIVI…RRLFGWLESQ (193 aa). Catalysis depends on residues Ser-176, His-202, and Asp-298.

It belongs to the CheB family. In terms of processing, phosphorylated by CheA. Phosphorylation of the N-terminal regulatory domain activates the methylesterase activity.

Its subcellular location is the cytoplasm. The catalysed reaction is [protein]-L-glutamate 5-O-methyl ester + H2O = L-glutamyl-[protein] + methanol + H(+). It carries out the reaction L-glutaminyl-[protein] + H2O = L-glutamyl-[protein] + NH4(+). Functionally, involved in chemotaxis. Part of a chemotaxis signal transduction system that modulates chemotaxis in response to various stimuli. Catalyzes the demethylation of specific methylglutamate residues introduced into the chemoreceptors (methyl-accepting chemotaxis proteins or MCP) by CheR. Also mediates the irreversible deamidation of specific glutamine residues to glutamic acid. The polypeptide is Protein-glutamate methylesterase/protein-glutamine glutaminase 1 (Geobacter metallireducens (strain ATCC 53774 / DSM 7210 / GS-15)).